The chain runs to 298 residues: Uricase (298 aa).

Catalysis depends on charge relay system residues lysine 18 and threonine 63. Residues threonine 63, aspartate 64, phenylalanine 165, arginine 182, valine 229, glutamine 230, and asparagine 256 each contribute to the urate site. The active-site Charge relay system is histidine 258. Residues 296–298 (ARM) carry the Microbody targeting signal motif.

Belongs to the uricase family. As to quaternary structure, homotetramer; dimer of dimers.

It localises to the peroxisome. It carries out the reaction urate + O2 + H2O = 5-hydroxyisourate + H2O2. It functions in the pathway purine metabolism; urate degradation; (S)-allantoin from urate: step 1/3. Its activity is regulated as follows. Competitively inhibited by xanthine. Its function is as follows. Catalyzes the oxidation of uric acid to 5-hydroxyisourate, which is further processed to form (S)-allantoin. This is Uricase from Danio rerio (Zebrafish).